A 275-amino-acid chain; its full sequence is NifU-like protein 5, mitochondrial (275 aa).

The transit peptide at 1 to 61 directs the protein to the mitochondrion; that stretch reads MKGLTRLLNS…TNASRNCSRS (61 aa).

Belongs to the NifU family.

Its subcellular location is the mitochondrion. In terms of biological role, molecular scaffold for [Fe-S] cluster assembly of mitochondrial iron-sulfur proteins. This Arabidopsis thaliana (Mouse-ear cress) protein is NifU-like protein 5, mitochondrial (NIFU5).